Reading from the N-terminus, the 276-residue chain is MAEENQEETLELKPSRKPPHFVLIHGMSLGSWCWYKIKCLMEVSGFTVTCIDLKSSGIDSSSVDSLTTFDQYNQPLIDFLSSFPEQEQVILVGHSAGGLSLTSAIQRFPKKICLAVFIGASMLKNGLQTDEDMKDGVPDLSEHGDVYELGFGLGPENPPTSAIIKPEYRRKLLYHMSPQQECSLAALMMRPAPILALTTAKLEEEEKEKGQEEQVPRVYIKTLLDRVMKPEQQDAMIRRWPPSQVYELESDHSPFFSNPFVLFGLLIKAAVSVGSI.

The 120-residue stretch at 19–138 (PHFVLIHGMS…TDEDMKDGVP (120 aa)) folds into the AB hydrolase-1 domain. Catalysis depends on serine 95, which acts as the Acyl-ester intermediate. Residues aspartate 225 and histidine 252 each act as charge relay system in the active site.

It belongs to the AB hydrolase superfamily. Methylesterase family. As to expression, expressed in several tissues of seedlings and adult plants, with a higher relative level of expression in the seedling shoot apex and the adult stem.

It carries out the reaction methyl (indol-3-yl)acetate + H2O = (indol-3-yl)acetate + methanol + H(+). Its pathway is plant hormone biosynthesis. Methylesterase that efficiently and specifically hydrolyzes methyl indole-3-acetic acid (MeIAA) to IAA (auxin). MeIAA is believed to be an inactive form of auxin that needs to be demethylated to exert a biological effect. The polypeptide is Methylesterase 17 (Arabidopsis thaliana (Mouse-ear cress)).